Here is a 1039-residue protein sequence, read N- to C-terminus: Probable calcium-transporting ATPase 9, plasma membrane-type (1039 aa).

The Cytoplasmic segment spans residues 1 to 175 (MEKLDRYLQE…FVWDALQDMT (175 aa)). The next 2 helical transmembrane spans lie at 176-196 (LIILMVCALLSVAVGLATEGW) and 199-219 (GMYDGLGIILSIFLVVMVTAV). Residues 220–250 (SDYKQSLQFKELDNEKKKIFIHVTRDGRRQK) lie on the Cytoplasmic side of the membrane. 2 helical membrane passes run 251–271 (ISIYDLVVGDIVHLSIGDQVP) and 353–373 (VATIIGKIGLVFAILTFLVLL). At 374 to 406 (VRFLIDKGMTVGLLKWYSTDALTIVNYFATAVT) the chain is on the cytoplasmic side. The chain crosses the membrane as a helical span at residues 407–427 (IIVVAVPEGLPLAVTLSLAFA). The active-site 4-aspartylphosphate intermediate is D456. Mg(2+) is bound by residues D758 and D762. A helical transmembrane segment spans residues 825 to 845 (IVALVINFVSACIIGSAPLTA). The Cytoplasmic segment spans residues 846 to 847 (VQ). 2 helical membrane passes run 848–868 (LLWVNMIMDTLGALALATEPP) and 892–912 (NIMGQSLYQLFVLGALMFGGE). At 913–960 (RLLNIKGADSKSIINTLIFNSFVFCQVFNEINSREMQKINVFRGIISN) the chain is on the cytoplasmic side. The next 2 membrane-spanning stretches (helical) occupy residues 961–981 (WIFIAVIAATVAFQVVIIEFL) and 995–1015 (WLLSVGLGSISLIVGVILKCI). Residues 1016–1039 (PVGSGETSATPNGYRPLANGPDDI) are Cytoplasmic-facing.

The protein belongs to the cation transport ATPase (P-type) (TC 3.A.3) family. Type IIB subfamily.

The protein resides in the membrane. The enzyme catalyses Ca(2+)(in) + ATP + H2O = Ca(2+)(out) + ADP + phosphate + H(+). Activated by calmodulin. This magnesium-dependent enzyme catalyzes the hydrolysis of ATP coupled with the translocation of calcium from the cytosol out of the cell, into the endoplasmic reticulum, or into organelles. This is Probable calcium-transporting ATPase 9, plasma membrane-type from Oryza sativa subsp. japonica (Rice).